The chain runs to 266 residues: 3-methyl-2-oxobutanoate hydroxymethyltransferase (266 aa).

Residues aspartate 47 and aspartate 86 each contribute to the Mg(2+) site. Residues 47–48, aspartate 86, and lysine 114 contribute to the 3-methyl-2-oxobutanoate site; that span reads DS. Position 116 (glutamate 116) interacts with Mg(2+). The Proton acceptor role is filled by glutamate 183.

Belongs to the PanB family. As to quaternary structure, homodecamer; pentamer of dimers. Mg(2+) serves as cofactor.

The protein resides in the cytoplasm. It catalyses the reaction 3-methyl-2-oxobutanoate + (6R)-5,10-methylene-5,6,7,8-tetrahydrofolate + H2O = 2-dehydropantoate + (6S)-5,6,7,8-tetrahydrofolate. Its pathway is cofactor biosynthesis; (R)-pantothenate biosynthesis; (R)-pantoate from 3-methyl-2-oxobutanoate: step 1/2. Catalyzes the reversible reaction in which hydroxymethyl group from 5,10-methylenetetrahydrofolate is transferred onto alpha-ketoisovalerate to form ketopantoate. This chain is 3-methyl-2-oxobutanoate hydroxymethyltransferase, found in Idiomarina loihiensis (strain ATCC BAA-735 / DSM 15497 / L2-TR).